Reading from the N-terminus, the 210-residue chain is Imidazole glycerol phosphate synthase subunit HisH (210 aa).

Residues 3-208 (PIAIIDYGMG…GELVRHAGNA (206 aa)) form the Glutamine amidotransferase type-1 domain. Catalysis depends on cysteine 81, which acts as the Nucleophile. Active-site residues include histidine 183 and glutamate 185.

Heterodimer of HisH and HisF.

It localises to the cytoplasm. It carries out the reaction 5-[(5-phospho-1-deoxy-D-ribulos-1-ylimino)methylamino]-1-(5-phospho-beta-D-ribosyl)imidazole-4-carboxamide + L-glutamine = D-erythro-1-(imidazol-4-yl)glycerol 3-phosphate + 5-amino-1-(5-phospho-beta-D-ribosyl)imidazole-4-carboxamide + L-glutamate + H(+). The enzyme catalyses L-glutamine + H2O = L-glutamate + NH4(+). The protein operates within amino-acid biosynthesis; L-histidine biosynthesis; L-histidine from 5-phospho-alpha-D-ribose 1-diphosphate: step 5/9. In terms of biological role, IGPS catalyzes the conversion of PRFAR and glutamine to IGP, AICAR and glutamate. The HisH subunit catalyzes the hydrolysis of glutamine to glutamate and ammonia as part of the synthesis of IGP and AICAR. The resulting ammonia molecule is channeled to the active site of HisF. This is Imidazole glycerol phosphate synthase subunit HisH from Moorella thermoacetica (strain ATCC 39073 / JCM 9320).